Here is an 83-residue protein sequence, read N- to C-terminus: Small ribosomal subunit protein eS21 (83 aa).

It belongs to the eukaryotic ribosomal protein eS21 family. Component of the 40S small ribosomal subunit.

The protein localises to the cytoplasm. It localises to the cytosol. The protein resides in the rough endoplasmic reticulum. In Biphyllus lunatus (Beetle), this protein is Small ribosomal subunit protein eS21 (RpS21).